We begin with the raw amino-acid sequence, 546 residues long: Probable sucrose-6-phosphate hydrolase (546 aa).

Substrate is bound by residues 105-108 (LLND), Gln-124, 167-168 (FS), 228-229 (RD), and Glu-283. The active site involves Asp-108.

The protein belongs to the glycosyl hydrolase 32 family.

It localises to the cytoplasm. The catalysed reaction is Hydrolysis of terminal non-reducing beta-D-fructofuranoside residues in beta-D-fructofuranosides.. The protein operates within glycan biosynthesis; sucrose metabolism. In terms of biological role, enables the bacterium to metabolize sucrose as a sole carbon source. In Vibrio cholerae serotype O1 (strain ATCC 39541 / Classical Ogawa 395 / O395), this protein is Probable sucrose-6-phosphate hydrolase (cscA).